The chain runs to 418 residues: tRNA wybutosine-synthesizing protein 2 (418 aa).

Residues S228, K235, 275-276 (EI), and 302-303 (EN) each bind S-adenosyl-L-methionine.

It belongs to the class I-like SAM-binding methyltransferase superfamily. TRM5/TYW2 family.

It localises to the cytoplasm. The protein resides in the nucleus. The enzyme catalyses 4-demethylwyosine(37) in tRNA(Phe) + S-adenosyl-L-methionine = 4-demethyl-7-[(3S)-3-amino-3-carboxypropyl]wyosine(37) in tRNA(Phe) + S-methyl-5'-thioadenosine + H(+). It participates in tRNA modification; wybutosine-tRNA(Phe) biosynthesis. In terms of biological role, S-adenosyl-L-methionine-dependent transferase that acts as a component of the wybutosine biosynthesis pathway. Wybutosine is a hyper modified guanosine with a tricyclic base found at the 3'-position adjacent to the anticodon of eukaryotic phenylalanine tRNA. Catalyzes the transfer of the alpha-amino-alpha-carboxypropyl (acp) group from S-adenosyl-L-methionine to the C-7 position of 4-demethylwyosine (imG-14) to produce wybutosine-86. The protein is tRNA wybutosine-synthesizing protein 2 (trm12) of Schizosaccharomyces pombe (strain 972 / ATCC 24843) (Fission yeast).